The chain runs to 461 residues: uncharacterized protein (461 aa).

2 consecutive transmembrane segments (helical) span residues 18-38 (IITW…FLIY) and 124-144 (FIFL…ILSI). PLD phosphodiesterase domains lie at 197 to 224 (YNYR…ADEY) and 374 to 401 (TPGF…DYRS).

This sequence belongs to the phospholipase D family. Cardiolipin synthase subfamily.

The protein localises to the cell membrane. This is an uncharacterized protein from Streptococcus mutans serotype c (strain ATCC 700610 / UA159).